The chain runs to 535 residues: Bifunctional purine biosynthesis protein PurH (535 aa).

The 146-residue stretch at 6–151 (TRLPIRRALI…KNHKDVAIVV (146 aa)) folds into the MGS-like domain.

The protein belongs to the PurH family.

It carries out the reaction (6R)-10-formyltetrahydrofolate + 5-amino-1-(5-phospho-beta-D-ribosyl)imidazole-4-carboxamide = 5-formamido-1-(5-phospho-D-ribosyl)imidazole-4-carboxamide + (6S)-5,6,7,8-tetrahydrofolate. It catalyses the reaction IMP + H2O = 5-formamido-1-(5-phospho-D-ribosyl)imidazole-4-carboxamide. It functions in the pathway purine metabolism; IMP biosynthesis via de novo pathway; 5-formamido-1-(5-phospho-D-ribosyl)imidazole-4-carboxamide from 5-amino-1-(5-phospho-D-ribosyl)imidazole-4-carboxamide (10-formyl THF route): step 1/1. Its pathway is purine metabolism; IMP biosynthesis via de novo pathway; IMP from 5-formamido-1-(5-phospho-D-ribosyl)imidazole-4-carboxamide: step 1/1. The sequence is that of Bifunctional purine biosynthesis protein PurH from Pseudomonas aeruginosa (strain LESB58).